The chain runs to 429 residues: Histidinol dehydrogenase (429 aa).

NAD(+)-binding residues include Y127, Q188, and N211. Residues S234, Q256, and H259 each contribute to the substrate site. The Zn(2+) site is built by Q256 and H259. Residues E324 and H325 each act as proton acceptor in the active site. Substrate is bound by residues H325, D358, E412, and H417. Position 358 (D358) interacts with Zn(2+). H417 lines the Zn(2+) pocket.

Belongs to the histidinol dehydrogenase family. Zn(2+) serves as cofactor.

The enzyme catalyses L-histidinol + 2 NAD(+) + H2O = L-histidine + 2 NADH + 3 H(+). It functions in the pathway amino-acid biosynthesis; L-histidine biosynthesis; L-histidine from 5-phospho-alpha-D-ribose 1-diphosphate: step 9/9. Catalyzes the sequential NAD-dependent oxidations of L-histidinol to L-histidinaldehyde and then to L-histidine. This is Histidinol dehydrogenase from Bacillus cereus (strain ATCC 14579 / DSM 31 / CCUG 7414 / JCM 2152 / NBRC 15305 / NCIMB 9373 / NCTC 2599 / NRRL B-3711).